The following is a 449-amino-acid chain: Probable glycine dehydrogenase (decarboxylating) subunit 1 (449 aa).

The protein belongs to the GcvP family. N-terminal subunit subfamily. The glycine cleavage system is composed of four proteins: P, T, L and H. In this organism, the P 'protein' is a heterodimer of two subunits.

It catalyses the reaction N(6)-[(R)-lipoyl]-L-lysyl-[glycine-cleavage complex H protein] + glycine + H(+) = N(6)-[(R)-S(8)-aminomethyldihydrolipoyl]-L-lysyl-[glycine-cleavage complex H protein] + CO2. Functionally, the glycine cleavage system catalyzes the degradation of glycine. The P protein binds the alpha-amino group of glycine through its pyridoxal phosphate cofactor; CO(2) is released and the remaining methylamine moiety is then transferred to the lipoamide cofactor of the H protein. The sequence is that of Probable glycine dehydrogenase (decarboxylating) subunit 1 from Sulfurisphaera tokodaii (strain DSM 16993 / JCM 10545 / NBRC 100140 / 7) (Sulfolobus tokodaii).